Here is a 215-residue protein sequence, read N- to C-terminus: Pyrrolidone-carboxylate peptidase (215 aa).

Active-site residues include Glu-80, Cys-143, and His-167.

It belongs to the peptidase C15 family. As to quaternary structure, homotetramer.

It is found in the cytoplasm. It carries out the reaction Release of an N-terminal pyroglutamyl group from a polypeptide, the second amino acid generally not being Pro.. Removes 5-oxoproline from various penultimate amino acid residues except L-proline. The chain is Pyrrolidone-carboxylate peptidase from Bacillus cereus (strain ATCC 14579 / DSM 31 / CCUG 7414 / JCM 2152 / NBRC 15305 / NCIMB 9373 / NCTC 2599 / NRRL B-3711).